A 520-amino-acid polypeptide reads, in one-letter code: Keratin, type II cytoskeletal 78 (520 aa).

The tract at residues 1-110 (MSLSPCRAQR…DPQFQVVRTQ (110 aa)) is head. The interval 111 to 146 (ETQEIRTLNNQFASFIDKVRFLEQQNKVLETKWHLL) is coil 1A. The IF rod domain maps to 111-424 (ETQEIRTLNN…RLLEGEECRM (314 aa)). Positions 147–165 (QQQGLSGSQQGLEPVFEAC) are linker 1. The coil 1B stretch occupies residues 166 to 258 (LDQLRKQLEQ…LNEEELGQLQ (93 aa)). The tract at residues 259–281 (TQASDTSVVLSMDNNRYLDFSSI) is linker 12. The coil 2 stretch occupies residues 282 to 421 (ITEVRARYEE…TYRRLLEGEE (140 aa)). A tail region spans residues 422-520 (CRMSGECTSQ…ESSLKTSITY (99 aa)).

Belongs to the intermediate filament family. Heterotetramer of two type I and two type II keratins. As to expression, in non-keratinising esophageal and vaginal epithelium, strongly expressed in the basal and parabasal/lower suprabasal cell layers with considerably decreased expression in the mid/upper suprabasal layers (at protein level). A similar gradient from basal to lower suprabasal layers is seen in the partially keratinised dorsal tongue epithelium, in the scalp and in the plantar epidermis (at protein level). Extension of expression into the suprabasal compartments is distinctly more pronounced in non-keratinising epithelia than in keratinising epithelia and epidermis (at protein level). In scalp sections, present in the interfollicular epidermis and infundibulum including the entire outer root sheath of the hair follicles and also in the sebocytes (at protein level). In sweat glands, expressed in peripheral and luminal cells of the lower duct and in peripheral cells of the middle/upper duct with no expression observed in luminal cells (at protein level). In embryos at the 14th week of pregnancy, detected in basal and parabasal layers but is absent from the uppermost epidermal layer (at protein level). Expressed in tongue epithelium.

The sequence is that of Keratin, type II cytoskeletal 78 (KRT78) from Homo sapiens (Human).